Reading from the N-terminus, the 231-residue chain is Ribonuclease P protein component 3 (231 aa).

This sequence belongs to the eukaryotic/archaeal RNase P protein component 3 family. As to quaternary structure, consists of a catalytic RNA component and at least 4-5 protein subunits.

The protein localises to the cytoplasm. It catalyses the reaction Endonucleolytic cleavage of RNA, removing 5'-extranucleotides from tRNA precursor.. Part of ribonuclease P, a protein complex that generates mature tRNA molecules by cleaving their 5'-ends. The chain is Ribonuclease P protein component 3 from Methanococcus vannielii (strain ATCC 35089 / DSM 1224 / JCM 13029 / OCM 148 / SB).